Consider the following 736-residue polypeptide: Protein kinase C epsilon type (736 aa).

Residues methionine 1–isoleucine 117 form the C2 domain. Serine 62 is subject to Phosphoserine. The segment at glycine 169 to valine 220 adopts a Phorbol-ester/DAG-type 1 zinc-finger fold. Threonine 228 carries the phosphothreonine modification. Serine 234 is subject to Phosphoserine. The segment at proline 242–cysteine 292 adopts a Phorbol-ester/DAG-type 2 zinc-finger fold. At threonine 309 the chain carries Phosphothreonine. Residues proline 310–leucine 356 form a disordered region. Phosphoserine is present on residues serine 316, serine 329, and serine 337. Position 346 is a phosphoserine; by GSK3-beta (serine 346). Residue threonine 349 is modified to Phosphothreonine. Serine 350 carries the phosphoserine; by MAPK11 and MAPK14 modification. Phosphoserine; by autocatalysis is present on serine 368. Positions phenylalanine 369–glycine 397 are disordered. Serine 388 carries the phosphoserine modification. The region spanning phenylalanine 407–phenylalanine 667 is the Protein kinase domain. Residues leucine 413–valine 421 and lysine 436 each bind ATP. Aspartate 531 functions as the Proton acceptor in the catalytic mechanism. Threonine 565 bears the Phosphothreonine; by PDPK1 mark. One can recognise an AGC-kinase C-terminal domain in the interval lysine 668–proline 736. Threonine 702 carries the post-translational modification Phosphothreonine. Position 709 is a phosphothreonine; by autocatalysis (threonine 709). Serine 728 is modified (phosphoserine; by autocatalysis).

Belongs to the protein kinase superfamily. AGC Ser/Thr protein kinase family. PKC subfamily. Forms a ternary complex with TRIM63 and RACK1/GN2BL1. Can form a complex with PDLIM5 and N-type calcium channel. Interacts with COPB1. Interacts with DGKQ. Interacts with STAT3. Interacts with YWHAB. Interacts with HSP90AB1; promotes functional activation in a heat shock-dependent manner. Interacts (via phorbol-ester/DAG-type 2 domain) with PRPH and VIM. Interacts with NLRP5/MATER. Post-translationally, phosphorylation on Thr-565 by PDPK1 triggers autophosphorylation on Ser-728. Phosphorylation in the hinge domain at Ser-350 by MAPK11 or MAPK14, Ser-346 by GSK3B and Ser-368 by autophosphorylation is required for interaction with YWHAB. In response to growth factors, phosphorylated at Thr-702 and Ser-728 by the mTORC2 complex, promoting autophosphorylation and activation of PRKCE.

Its subcellular location is the cytoplasm. The protein resides in the cytoskeleton. It is found in the cell membrane. The protein localises to the perinuclear region. It localises to the nucleus. The catalysed reaction is L-seryl-[protein] + ATP = O-phospho-L-seryl-[protein] + ADP + H(+). It carries out the reaction L-threonyl-[protein] + ATP = O-phospho-L-threonyl-[protein] + ADP + H(+). Its activity is regulated as follows. Novel PKCs (PRKCD, PRKCE, PRKCH and PRKCQ) are calcium-insensitive, but activated by diacylglycerol (DAG) and phosphatidylserine. Three specific sites; Thr-565 (activation loop of the kinase domain), Thr-709 (turn motif) and Ser-728 (hydrophobic region), need to be phosphorylated for its full activation. Functionally, calcium-independent, phospholipid- and diacylglycerol (DAG)-dependent serine/threonine-protein kinase that plays essential roles in the regulation of multiple cellular processes linked to cytoskeletal proteins, such as cell adhesion, motility, migration and cell cycle, functions in neuron growth and ion channel regulation, and is involved in immune response, cancer cell invasion and regulation of apoptosis. Mediates cell adhesion to the extracellular matrix via integrin-dependent signaling, by mediating angiotensin-2-induced activation of integrin beta-1 (ITGB1) in cardiac fibroblasts. Phosphorylates MARCKS, which phosphorylates and activates PTK2/FAK, leading to the spread of cardiomyocytes. Involved in the control of the directional transport of ITGB1 in mesenchymal cells by phosphorylating vimentin (VIM), an intermediate filament (IF) protein. In epithelial cells, associates with and phosphorylates keratin-8 (KRT8), which induces targeting of desmoplakin at desmosomes and regulates cell-cell contact. Phosphorylates IQGAP1, which binds to CDC42, mediating epithelial cell-cell detachment prior to migration. During cytokinesis, forms a complex with YWHAB, which is crucial for daughter cell separation, and facilitates abscission by a mechanism which may implicate the regulation of RHOA. In cardiac myocytes, regulates myofilament function and excitation coupling at the Z-lines, where it is indirectly associated with F-actin via interaction with COPB1. During endothelin-induced cardiomyocyte hypertrophy, mediates activation of PTK2/FAK, which is critical for cardiomyocyte survival and regulation of sarcomere length. Plays a role in the pathogenesis of dilated cardiomyopathy via persistent phosphorylation of troponin I (TNNI3). Involved in nerve growth factor (NFG)-induced neurite outgrowth and neuron morphological change independently of its kinase activity, by inhibition of RHOA pathway, activation of CDC42 and cytoskeletal rearrangement. May be involved in presynaptic facilitation by mediating phorbol ester-induced synaptic potentiation. Phosphorylates gamma-aminobutyric acid receptor subunit gamma-2 (GABRG2), which reduces the response of GABA receptors to ethanol and benzodiazepines and may mediate acute tolerance to the intoxicating effects of ethanol. Upon PMA treatment, phosphorylates the capsaicin- and heat-activated cation channel TRPV1, which is required for bradykinin-induced sensitization of the heat response in nociceptive neurons. Is able to form a complex with PDLIM5 and N-type calcium channel, and may enhance channel activities and potentiates fast synaptic transmission by phosphorylating the pore-forming alpha subunit CACNA1B (CaV2.2). Downstream of TLR4, plays an important role in the lipopolysaccharide (LPS)-induced immune response by phosphorylating and activating TICAM2/TRAM, which in turn activates the transcription factor IRF3 and subsequent cytokines production. In differentiating erythroid progenitors, is regulated by EPO and controls the protection against the TNFSF10/TRAIL-mediated apoptosis, via BCL2. May be involved in the regulation of the insulin-induced phosphorylation and activation of AKT1. Phosphorylates NLRP5/MATER and may thereby modulate AKT pathway activation in cumulus cells. Phosphorylates and activates LRRK1, which phosphorylates RAB proteins involved in intracellular trafficking. The protein is Protein kinase C epsilon type (PRKCE) of Oryctolagus cuniculus (Rabbit).